We begin with the raw amino-acid sequence, 145 residues long: uncharacterized protein (145 aa).

Residues 1–18 (MAEQQPSKEEKKEDKKDE) are compositionally biased toward basic and acidic residues. The interval 1–61 (MAEQQPSKEE…CTEGEWDASD (61 aa)) is disordered.

This is an uncharacterized protein from Caenorhabditis elegans.